The sequence spans 90 residues: UPF0237 protein PAE3582 (90 aa).

The region spanning 5-74 is the ACT domain; sequence VVSVLGADRV…LEEEGKRLGV (70 aa).

Belongs to the UPF0237 family.

The sequence is that of UPF0237 protein PAE3582 from Pyrobaculum aerophilum (strain ATCC 51768 / DSM 7523 / JCM 9630 / CIP 104966 / NBRC 100827 / IM2).